Here is a 417-residue protein sequence, read N- to C-terminus: D-galactonate dehydratase family member SeV_A0456 (417 aa).

Substrate is bound by residues glutamine 43 and histidine 127. Tyrosine 158 (proton donor/acceptor) is an active-site residue. Position 223 (aspartate 223) interacts with Mg(2+). Histidine 225 (proton donor/acceptor) is an active-site residue. Positions 249 and 275 each coordinate Mg(2+). Positions 275, 296, 325, 329, and 352 each coordinate substrate.

Belongs to the mandelate racemase/muconate lactonizing enzyme family. GalD subfamily. It depends on Mg(2+) as a cofactor.

It catalyses the reaction D-gluconate = 2-dehydro-3-deoxy-D-gluconate + H2O. In terms of biological role, has low D-gluconate dehydratase activity (in vitro), suggesting that it has no significant role in D-gluconate degradation in vivo. Has no detectable activity with a panel of 70 other acid sugars (in vitro). The protein is D-galactonate dehydratase family member SeV_A0456 of Salmonella virchow (strain SL491).